The chain runs to 98 residues: NADH-ubiquinone oxidoreductase chain 4L (98 aa).

3 consecutive transmembrane segments (helical) span residues 1–21 (MPLI…GVLI), 26–46 (LMSS…LVSL), and 61–81 (LILL…LVMV).

Belongs to the complex I subunit 4L family. As to quaternary structure, core subunit of respiratory chain NADH dehydrogenase (Complex I) which is composed of 45 different subunits.

The protein resides in the mitochondrion inner membrane. The enzyme catalyses a ubiquinone + NADH + 5 H(+)(in) = a ubiquinol + NAD(+) + 4 H(+)(out). Its function is as follows. Core subunit of the mitochondrial membrane respiratory chain NADH dehydrogenase (Complex I) which catalyzes electron transfer from NADH through the respiratory chain, using ubiquinone as an electron acceptor. Part of the enzyme membrane arm which is embedded in the lipid bilayer and involved in proton translocation. This chain is NADH-ubiquinone oxidoreductase chain 4L (MT-ND4L), found in Nycticebus coucang (Slow loris).